We begin with the raw amino-acid sequence, 273 residues long: Dermonecrotic toxin LapSicTox-alphaIB1aiv (273 aa).

His-5 is a catalytic residue. Glu-25 and Asp-27 together coordinate Mg(2+). Residue His-41 is the Nucleophile of the active site. Cystine bridges form between Cys-45–Cys-51 and Cys-47–Cys-190. Asp-85 contacts Mg(2+). Asn-250 is a glycosylation site (N-linked (GlcNAc...) asparagine).

Belongs to the arthropod phospholipase D family. Class II subfamily. It depends on Mg(2+) as a cofactor. In terms of tissue distribution, expressed by the venom gland.

Its subcellular location is the secreted. The enzyme catalyses an N-(acyl)-sphingosylphosphocholine = an N-(acyl)-sphingosyl-1,3-cyclic phosphate + choline. It carries out the reaction an N-(acyl)-sphingosylphosphoethanolamine = an N-(acyl)-sphingosyl-1,3-cyclic phosphate + ethanolamine. It catalyses the reaction a 1-acyl-sn-glycero-3-phosphocholine = a 1-acyl-sn-glycero-2,3-cyclic phosphate + choline. The catalysed reaction is a 1-acyl-sn-glycero-3-phosphoethanolamine = a 1-acyl-sn-glycero-2,3-cyclic phosphate + ethanolamine. Dermonecrotic toxins cleave the phosphodiester linkage between the phosphate and headgroup of certain phospholipids (sphingolipid and lysolipid substrates), forming an alcohol (often choline) and a cyclic phosphate. This toxin acts on sphingomyelin (SM). It may also act on ceramide phosphoethanolamine (CPE), lysophosphatidylcholine (LPC) and lysophosphatidylethanolamine (LPE), but not on lysophosphatidylserine (LPS), and lysophosphatidylglycerol (LPG). It acts by transphosphatidylation, releasing exclusively cyclic phosphate products as second products. Induces dermonecrosis, hemolysis, increased vascular permeability, edema, inflammatory response, and platelet aggregation. The sequence is that of Dermonecrotic toxin LapSicTox-alphaIB1aiv from Loxosceles apachea (Apache recluse spider).